A 487-amino-acid polypeptide reads, in one-letter code: Glucose starvation modulator protein 1 (487 aa).

A disordered region spans residues 1 to 75 (MSIRFPEIPG…KRLTPQEKKA (75 aa)). Residues 59–68 (SFSSSMTKRL) are compositionally biased toward polar residues. The segment at residues 83-111 (CVFCHSKHLQCSHSRPCQNCIKRNLAHEC) is a DNA-binding region (zn(2)-C6 fungal-type). Positions 122–139 (MSTTEVPAVSGESSSESG) are enriched in polar residues. The tract at residues 122-158 (MSTTEVPAVSGESSSESGRATGENGSEMGNPPDPQIA) is disordered. One can recognise a PAS domain in the interval 348–420 (CLLDYENLSR…FRLFESVAVG (73 aa)).

The protein belongs to the ERT1/acuK family.

The protein resides in the nucleus. Transcription factor which regulates nonfermentable carbon utilization. This chain is Glucose starvation modulator protein 1 (GSM1), found in Clavispora lusitaniae (strain ATCC 42720) (Yeast).